An 84-amino-acid chain; its full sequence is Small ribosomal subunit protein bS20 (84 aa).

It belongs to the bacterial ribosomal protein bS20 family.

Binds directly to 16S ribosomal RNA. In Bacteroides fragilis (strain ATCC 25285 / DSM 2151 / CCUG 4856 / JCM 11019 / LMG 10263 / NCTC 9343 / Onslow / VPI 2553 / EN-2), this protein is Small ribosomal subunit protein bS20.